Consider the following 541-residue polypeptide: Membrane protein insertase YidC (541 aa).

Helical transmembrane passes span 7 to 27, 289 to 309, 356 to 376, 430 to 450, 463 to 483, and 498 to 518; these read FLIV…GVTH, YLLT…VTLP, IIHS…LAFY, LPIL…LEMV, LSAQ…MFAQ, and IMMA…SGLV.

The protein belongs to the OXA1/ALB3/YidC family. Type 1 subfamily. As to quaternary structure, interacts with the Sec translocase complex via SecD. Specifically interacts with transmembrane segments of nascent integral membrane proteins during membrane integration.

The protein localises to the cell inner membrane. Functionally, required for the insertion and/or proper folding and/or complex formation of integral membrane proteins into the membrane. Involved in integration of membrane proteins that insert both dependently and independently of the Sec translocase complex, as well as at least some lipoproteins. Aids folding of multispanning membrane proteins. The polypeptide is Membrane protein insertase YidC (Ruthia magnifica subsp. Calyptogena magnifica).